The chain runs to 366 residues: Beta-1,3-glucan-binding protein (366 aa).

A signal peptide spans 1 to 17 (MKGFVASVVLLACGALA). In terms of domain architecture, GH16 spans 18–364 (ADIVEPEDCT…YVRVWKMEST (347 aa)). The N-linked (GlcNAc...) asparagine glycan is linked to asparagine 66.

It belongs to the glycosyl hydrolase 16 family. As to expression, constitutively expressed in hemocytes.

It localises to the secreted. Its function is as follows. Binds to beta-1,3-glucan. May play a role in recognition of microorganisms and in activation of the prophenoloxidase cascade. The polypeptide is Beta-1,3-glucan-binding protein (Penaeus monodon (Giant tiger prawn)).